The following is a 136-amino-acid chain: MSETPSKAKASKPAESKAQASDSSGANQYAIVEASGQQFWLQPNRYYDFDRLEGEVGDKVSLKEVLLVSGKAGASLGQPYVKDAVVNLKVLAHRRGPKVIVYKMQKKKKTRRKNGHRQELTRVMVESITVGGKPLS.

Residues 1-21 are compositionally biased toward low complexity; the sequence is MSETPSKAKASKPAESKAQAS. Residues 1–25 are disordered; that stretch reads MSETPSKAKASKPAESKAQASDSSG.

This sequence belongs to the bacterial ribosomal protein bL21 family. Part of the 50S ribosomal subunit. Contacts protein L20.

In terms of biological role, this protein binds to 23S rRNA in the presence of protein L20. The chain is Large ribosomal subunit protein bL21 from Synechococcus sp. (strain RCC307).